A 226-amino-acid polypeptide reads, in one-letter code: DnaJ homolog subfamily C member 30, mitochondrial (226 aa).

The N-terminal 38 residues, 1 to 38 (MAAMRWRWWQRLLPWRLLQARGFPQNSAPSLGLGARTY), are a transit peptide targeting the mitochondrion. One can recognise a J domain in the interval 49–114 (ALYDLLGVPS…TLRRKYDRGL (66 aa)). The disordered stretch occupies residues 116–157 (SDEDLRGPGVRPSRTPAPDPGSPRTPPPTSRTHDGSRASPGA). The segment covering 130-144 (TPAPDPGSPRTPPPT) has biased composition (pro residues). A helical transmembrane segment spans residues 208–225 (DTAAIFLIFSIFIIIGFY).

Associates with the ATP synthase complex. Interacts with MT-ATP6; interaction is direct. Interacts with ATP5MC2; interaction is direct. Expressed in brain, heart, kidney, liver, lung, spleen, stomach and testis. Highly expressed in the brain. In the neocortex, expressed in most, if not all, glutamatergic excitatory projection neurons (pyramidal) and many interneurons, with the strongest signal noticeably in large pyramidal neurons of layer 3C. Also present in pyramidal neurons of layer 3C PNs of the superior temporal cortex, as well as in pyramidal neurons (Betz cells) of the layer 5B primary motor cortex (at protein level).

The protein resides in the mitochondrion inner membrane. Mitochondrial protein enriched in neurons that acts as a regulator of mitochondrial respiration. Associates with the ATP synthase complex and facilitates ATP synthesis. May be a chaperone protein involved in the turnover of the subunits of mitochondrial complex I N-module. It facilitates the degradation of N-module subunits damaged by oxidative stress, and contributes to complex I functional efficiency. The chain is DnaJ homolog subfamily C member 30, mitochondrial from Homo sapiens (Human).